A 144-amino-acid polypeptide reads, in one-letter code: Nucleoside diphosphate kinase (144 aa).

ATP is bound by residues lysine 11, phenylalanine 59, arginine 87, threonine 93, arginine 104, and asparagine 114. Residue histidine 117 is the Pros-phosphohistidine intermediate of the active site.

This sequence belongs to the NDK family. Homotetramer. Mg(2+) is required as a cofactor.

The protein resides in the cytoplasm. It carries out the reaction a 2'-deoxyribonucleoside 5'-diphosphate + ATP = a 2'-deoxyribonucleoside 5'-triphosphate + ADP. It catalyses the reaction a ribonucleoside 5'-diphosphate + ATP = a ribonucleoside 5'-triphosphate + ADP. Its function is as follows. Major role in the synthesis of nucleoside triphosphates other than ATP. The ATP gamma phosphate is transferred to the NDP beta phosphate via a ping-pong mechanism, using a phosphorylated active-site intermediate. This chain is Nucleoside diphosphate kinase, found in Coxiella burnetii (strain CbuG_Q212) (Coxiella burnetii (strain Q212)).